The sequence spans 240 residues: Ubiquinone biosynthesis O-methyltransferase (240 aa).

The S-adenosyl-L-methionine site is built by arginine 36, glycine 66, aspartate 87, and methionine 129.

Belongs to the methyltransferase superfamily. UbiG/COQ3 family.

The enzyme catalyses a 3-demethylubiquinol + S-adenosyl-L-methionine = a ubiquinol + S-adenosyl-L-homocysteine + H(+). It catalyses the reaction a 3-(all-trans-polyprenyl)benzene-1,2-diol + S-adenosyl-L-methionine = a 2-methoxy-6-(all-trans-polyprenyl)phenol + S-adenosyl-L-homocysteine + H(+). Its pathway is cofactor biosynthesis; ubiquinone biosynthesis. Functionally, O-methyltransferase that catalyzes the 2 O-methylation steps in the ubiquinone biosynthetic pathway. The protein is Ubiquinone biosynthesis O-methyltransferase of Pelagibacter ubique (strain HTCC1062).